The primary structure comprises 292 residues: MHIRFTKMQGAGNDFVVLDETQGRLGLTPAQYRFLADRHFGVGADQILTVRPSPGAGIDFEYVIHNADGGQVEQCGNGARCFARYVRDKGLTAQDTIRVQTMAGVIAPHLTADGRVTVDMGRPELEPARVPFDTTGLAPVSQGSGQKWPLALDGQASEATLLVAVVSMGNPHAVQLVDDVDTAPVAQTGPLIESHPRFPQRVNAGYLQIVNRGEVRLRVYERGAGETLACGTGACAAVVAGIRLGLLDARVQVHTRGGLLTIDWAGGLQDPVFMTGPATTVFEGEIDIPDAL.

Residues asparagine 13, glutamine 46, and asparagine 66 each contribute to the substrate site. Catalysis depends on cysteine 75, which acts as the Proton donor. Substrate-binding positions include 76–77 (GN), asparagine 170, asparagine 203, and 221–222 (ER). Cysteine 230 (proton acceptor) is an active-site residue. Residue 231–232 (GT) coordinates substrate.

This sequence belongs to the diaminopimelate epimerase family. In terms of assembly, homodimer.

The protein localises to the cytoplasm. It catalyses the reaction (2S,6S)-2,6-diaminopimelate = meso-2,6-diaminopimelate. The protein operates within amino-acid biosynthesis; L-lysine biosynthesis via DAP pathway; DL-2,6-diaminopimelate from LL-2,6-diaminopimelate: step 1/1. Its function is as follows. Catalyzes the stereoinversion of LL-2,6-diaminopimelate (L,L-DAP) to meso-diaminopimelate (meso-DAP), a precursor of L-lysine and an essential component of the bacterial peptidoglycan. This chain is Diaminopimelate epimerase, found in Acidovorax ebreus (strain TPSY) (Diaphorobacter sp. (strain TPSY)).